Reading from the N-terminus, the 429-residue chain is MAAIVIVGAQWGDEGKGKATDILGGLVDYVVKPNGGNNAGHTVVVGGEKYELKLLPAGVLSETATPILGNGVVINLEALFEEIDGLEARGADASRLRISANAHLVAPYHQVMDRVQERFLGKRAIGTTGRGIGPTYADKVSRVGIRVQDIFDESILRQKVESALDYKNQVLVKMYNRKAIVAEEIVQYFLSYADRLRPMVIDATLVLNEALDQGKHVLMEGGQATMLDVDHGTYPFVTSSNPTAGGASVGSGIGPTKITSSLGIIKAYTTRVGAGPFPTELFDKWGEYLQTVGGEVGVNTGRKRRCGWYDSVIARYASRVNGFTDYFLTKLDVLTGIGEIPICVAYDVDGVRHDEMPLTQSEFHHATPIFETMPAWDEDITDCKTFEDLPQKAQDYVRRLEELSGARFSYIGVGPGRDQTIVLHDVLEG.

Residues 12–18 (GDEGKGK) and 40–42 (GHT) each bind GTP. Asp-13 acts as the Proton acceptor in catalysis. Residues Asp-13 and Gly-40 each coordinate Mg(2+). IMP contacts are provided by residues 13–16 (DEGK), 38–41 (NAGH), Thr-128, Arg-142, Gln-223, Thr-238, and Arg-302. Residue His-41 is the Proton donor of the active site. 298–304 (VNTGRKR) provides a ligand contact to substrate. GTP contacts are provided by residues Arg-304, 330–332 (KLD), and 412–414 (GVG).

This sequence belongs to the adenylosuccinate synthetase family. Homodimer. The cofactor is Mg(2+).

It is found in the cytoplasm. The enzyme catalyses IMP + L-aspartate + GTP = N(6)-(1,2-dicarboxyethyl)-AMP + GDP + phosphate + 2 H(+). The protein operates within purine metabolism; AMP biosynthesis via de novo pathway; AMP from IMP: step 1/2. Its function is as follows. Plays an important role in the de novo pathway of purine nucleotide biosynthesis. Catalyzes the first committed step in the biosynthesis of AMP from IMP. The chain is Adenylosuccinate synthetase from Corynebacterium glutamicum (strain R).